A 327-amino-acid polypeptide reads, in one-letter code: Flotillin-like protein FloA (327 aa).

The helical transmembrane segment at Ile2–Val22 threads the bilayer. A disordered region spans residues Ala305 to Lys327. Basic and acidic residues predominate over residues Asn318–Lys327.

This sequence belongs to the flotillin-like FloA family. In terms of assembly, homooligomerizes.

It localises to the cell membrane. The protein resides in the membrane raft. Its function is as follows. Found in functional membrane microdomains (FMM) that may be equivalent to eukaryotic membrane rafts. FMMs are highly dynamic and increase in number as cells age. Flotillins are thought to be important factors in membrane fluidity. In Staphylococcus saprophyticus subsp. saprophyticus (strain ATCC 15305 / DSM 20229 / NCIMB 8711 / NCTC 7292 / S-41), this protein is Flotillin-like protein FloA.